The chain runs to 287 residues: Myogenin (287 aa).

Residues serine 77 and serine 79 each carry the phosphoserine; by CaMK2G modification. The bHLH domain occupies 81 to 132 (DRRRAATLREKRRLKKVNEAFEALKRSTLLNPNQRLPKVEILRSAIQYIERL). Position 87 is a phosphothreonine; by CaMK2G (threonine 87).

In terms of assembly, homodimer and heterodimer with E12; heterodimerization enhances MYOG DNA-binding and transcriptional activities. Interacts with SMARCA4/BRG1/BAF190A. Interacts (via C-terminal region) with SSRP1 and SUPT16H; the interaction is indicative of an interaction with the FACT complex. Interacts with CSRP3. In terms of processing, phosphorylated by CAMK2G on threonine and serine amino acids in a muscle activity-dependent manner. Phosphorylation of Thr-87 impairs both DNA-binding and trans-activation functions in contracting muscles. Expressed in muscle (at protein level).

Its subcellular location is the nucleus. Its function is as follows. Acts as a transcriptional activator that promotes transcription of muscle-specific target genes and plays a role in muscle differentiation, cell cycle exit and muscle atrophy. Essential for the development of functional embryonic skeletal fiber muscle differentiation. However is dispensable for postnatal skeletal muscle growth; phosphorylation by CAMK2G inhibits its transcriptional activity in respons to muscle activity. Required for the recruitment of the FACT complex to muscle-specific promoter regions, thus promoting gene expression initiation. During terminal myoblast differentiation, plays a role as a strong activator of transcription at loci with an open chromatin structure previously initiated by MYOD1. Together with MYF5 and MYOD1, co-occupies muscle-specific gene promoter core regions during myogenesis. Also cooperates with myocyte-specific enhancer factor MEF2D and BRG1-dependent recruitment of SWI/SNF chromatin-remodeling enzymes to alter chromatin structure at myogenic late gene promoters. Facilitates cell cycle exit during terminal muscle differentiation through the up-regulation of miR-20a expression, which in turn represses genes involved in cell cycle progression. Binds to the E-box containing (E1) promoter region of the miR-20a gene. Also plays a role in preventing reversal of muscle cell differentiation. Contributes to the atrophy-related gene expression in adult denervated muscles. Induces fibroblasts to differentiate into myoblasts. This Rattus norvegicus (Rat) protein is Myogenin (Myog).